The sequence spans 195 residues: MNIENLAYNSSSDVLKAKIKNDKFPVNLTVQYWVDVSRGSNIYYKSSIFQTEIYPKSEKELIVPLTLGDLESGIYNITLYVRVNNFALFNYQKVPVILKKSISIEINGSKGVMQQKSNKESDEIINETSETHKNMTIDIKNLSNNKDNKSNIEESTAKNVKSNIETKKSADNNSILGKISGFFGSIVSTIFSLFG.

Residues 175–195 form a helical membrane-spanning segment; that stretch reads ILGKISGFFGSIVSTIFSLFG.

The protein localises to the membrane. This is an uncharacterized protein from Methanocaldococcus jannaschii (strain ATCC 43067 / DSM 2661 / JAL-1 / JCM 10045 / NBRC 100440) (Methanococcus jannaschii).